The sequence spans 811 residues: Glycerol-3-phosphate acyltransferase (811 aa).

The HXXXXD motif motif lies at 308-313 (CHRSHM).

The protein belongs to the GPAT/DAPAT family.

It localises to the cell inner membrane. It carries out the reaction sn-glycerol 3-phosphate + an acyl-CoA = a 1-acyl-sn-glycero-3-phosphate + CoA. It functions in the pathway phospholipid metabolism; CDP-diacylglycerol biosynthesis; CDP-diacylglycerol from sn-glycerol 3-phosphate: step 1/3. This chain is Glycerol-3-phosphate acyltransferase, found in Pseudoalteromonas atlantica (strain T6c / ATCC BAA-1087).